We begin with the raw amino-acid sequence, 207 residues long: Protein-L-isoaspartate O-methyltransferase (207 aa).

S56 is a catalytic residue.

This sequence belongs to the methyltransferase superfamily. L-isoaspartyl/D-aspartyl protein methyltransferase family.

Its subcellular location is the cytoplasm. The enzyme catalyses [protein]-L-isoaspartate + S-adenosyl-L-methionine = [protein]-L-isoaspartate alpha-methyl ester + S-adenosyl-L-homocysteine. Functionally, catalyzes the methyl esterification of L-isoaspartyl residues in peptides and proteins that result from spontaneous decomposition of normal L-aspartyl and L-asparaginyl residues. It plays a role in the repair and/or degradation of damaged proteins. In Pyrobaculum neutrophilum (strain DSM 2338 / JCM 9278 / NBRC 100436 / V24Sta) (Thermoproteus neutrophilus), this protein is Protein-L-isoaspartate O-methyltransferase.